Here is a 965-residue protein sequence, read N- to C-terminus: Phosphatidylethanolamine N-methyltransferase (965 aa).

The Lumenal portion of the chain corresponds to 1-82; it reads MDRGLSTGTN…SPSEPKNLSD (82 aa). The segment at 34–54 is disordered; it reads PTVTNASNGKDKAGKTFGRTP. Residues 83-103 form a helical membrane-spanning segment; the sequence is LVVLTILAGHIFLLWILPSGA. The Cytoplasmic segment spans residues 104 to 106; that stretch reads KIP. A helical transmembrane segment spans residues 107–127; it reads VFAVIYLFWRSCYNAGIGWLL. Topologically, residues 128–192 are lumenal; the sequence is HNQSHHKTLV…EYNTWLVFRR (65 aa). The helical transmembrane segment at 193–213 threads the bilayer; it reads LVDLILMCDFASYCLFAIACS. Topologically, residues 214–220 are cytoplasmic; that stretch reads RHPANES. A helical transmembrane segment spans residues 221–241; it reads VLMTVIRWTSGIALVLFNLWV. At 242–274 the chain is on the lumenal side; that stretch reads KLDAHRVVKDYAWYWGDFFYLIDQELTFDGVFE. The helical transmembrane segment at 275 to 295 threads the bilayer; that stretch reads MAPHPMYSVGYAGYYGISLMA. The Cytoplasmic segment spans residues 296-297; it reads AS. Residues 298–318 form a helical membrane-spanning segment; that stretch reads YKVLFISIIAHAAQFAFLVLV. The Lumenal portion of the chain corresponds to 319 to 394; it reads ENPHIDKTYN…LDLHRITDTS (76 aa). The interval 326–368 is disordered; the sequence is TYNPPPPRKRTITEHDAASQRSQSPDTPNAPSVSEENVPNATT. The span at 344-368 shows a compositional bias: polar residues; sequence SQRSQSPDTPNAPSVSEENVPNATT. The helical transmembrane segment at 395-415 threads the bilayer; the sequence is SILVQFLMFSLTVLTPSTPWY. Gln-416 is a topological domain (cytoplasmic). Residues 417 to 437 form a helical membrane-spanning segment; the sequence is FLFVANAAIWRLWYSVGIGYL. Residues 438-470 lie on the Lumenal side of the membrane; it reads LNRQSNCKSWTRHFVKYGETPHEAWNQWKGTYH. A helical membrane pass occupies residues 471-491; that stretch reads LSMVMCYASFISAVWKMYTLP. Residues 492 to 503 are Cytoplasmic-facing; that stretch reads SNWGYGLAILRH. A helical transmembrane segment spans residues 504-524; sequence VLGAGLISLQIWTSVSIYESL. Residues 525 to 559 lie on the Lumenal side of the membrane; that stretch reads GEFGWFYGDFFFDESPKLTYNGIYRFLNNPERVLG. A helical membrane pass occupies residues 560–580; sequence LAGVWGAVLITASGTVAFLAF. Residues 581-965 lie on the Cytoplasmic side of the membrane; sequence LSHILSLGFI…GATTPTESKE (385 aa).

This sequence belongs to the class VI-like SAM-binding methyltransferase superfamily. CHO2 family.

It localises to the endoplasmic reticulum membrane. The catalysed reaction is a 1,2-diacyl-sn-glycero-3-phosphoethanolamine + S-adenosyl-L-methionine = a 1,2-diacyl-sn-glycero-3-phospho-N-methylethanolamine + S-adenosyl-L-homocysteine + H(+). It functions in the pathway phospholipid metabolism; phosphatidylcholine biosynthesis. Its function is as follows. Catalyzes the first step of the methylation pathway of phosphatidylcholine biosynthesis, the SAM-dependent methylation of phosphatidylethanolamine (PE) to phosphatidylmonomethylethanolamine (PMME). The protein is Phosphatidylethanolamine N-methyltransferase of Emericella nidulans (strain FGSC A4 / ATCC 38163 / CBS 112.46 / NRRL 194 / M139) (Aspergillus nidulans).